The sequence spans 863 residues: DNA-directed RNA polymerase subunit beta' (863 aa).

The interval 1–83 (MSGEVAQDQP…SKKKETKASQ (83 aa)) is disordered. Residues 23–36 (EIVNSAITVQSSAK) show a composition bias toward polar residues. Zn(2+) is bound by residues C159, C161, C180, and C183. Residues D621, D623, and D625 each coordinate Mg(2+).

Belongs to the RNA polymerase beta' chain family. RpoC1 subfamily. In terms of assembly, in plastids the minimal PEP RNA polymerase catalytic core is composed of four subunits: alpha, beta, beta', and beta''. When a (nuclear-encoded) sigma factor is associated with the core the holoenzyme is formed, which can initiate transcription. It depends on Mg(2+) as a cofactor. Zn(2+) serves as cofactor.

The protein resides in the plastid. Its subcellular location is the chloroplast. It carries out the reaction RNA(n) + a ribonucleoside 5'-triphosphate = RNA(n+1) + diphosphate. DNA-dependent RNA polymerase catalyzes the transcription of DNA into RNA using the four ribonucleoside triphosphates as substrates. This Nephroselmis olivacea (Green alga) protein is DNA-directed RNA polymerase subunit beta'.